The sequence spans 56 residues: Large ribosomal subunit protein bL33A (56 aa).

This sequence belongs to the bacterial ribosomal protein bL33 family.

The chain is Large ribosomal subunit protein bL33A from Cutibacterium acnes (strain DSM 16379 / KPA171202) (Propionibacterium acnes).